Reading from the N-terminus, the 82-residue chain is Large ribosomal subunit protein bL28 (82 aa).

Residues 1 to 25 form a disordered region; that stretch reads MAKVDQITKKRAMTGNTRSHALNHS.

This sequence belongs to the bacterial ribosomal protein bL28 family.

The polypeptide is Large ribosomal subunit protein bL28 (Malacoplasma penetrans (strain HF-2) (Mycoplasma penetrans)).